A 294-amino-acid chain; its full sequence is ATP synthase gamma chain (294 aa).

Belongs to the ATPase gamma chain family. As to quaternary structure, F-type ATPases have 2 components, CF(1) - the catalytic core - and CF(0) - the membrane proton channel. CF(1) has five subunits: alpha(3), beta(3), gamma(1), delta(1), epsilon(1). CF(0) has three main subunits: a, b and c.

It localises to the cell inner membrane. Its function is as follows. Produces ATP from ADP in the presence of a proton gradient across the membrane. The gamma chain is believed to be important in regulating ATPase activity and the flow of protons through the CF(0) complex. The protein is ATP synthase gamma chain of Paramagnetospirillum magneticum (strain ATCC 700264 / AMB-1) (Magnetospirillum magneticum).